The primary structure comprises 148 residues: uncharacterized protein (148 aa).

Residues 1–11 are compositionally biased toward polar residues; sequence MKPRNINNSLP. Residues 1 to 31 form a disordered region; that stretch reads MKPRNINNSLPLQPLVPDQENKNKKNEEKSV. Residues 19 to 30 show a composition bias toward basic and acidic residues; sequence QENKNKKNEEKS.

This is an uncharacterized protein from Escherichia coli (strain K12).